The sequence spans 190 residues: Small ribosomal subunit protein uS5 (190 aa).

An S5 DRBM domain is found at 19 to 82 (IIDKLVTINR…ERAKRSMIRV (64 aa)). A disordered region spans residues 161–190 (SVASRRGKKVSDILGRREPVAGQEGEEAHA). The segment covering 169 to 179 (KVSDILGRREP) has biased composition (basic and acidic residues).

Belongs to the universal ribosomal protein uS5 family. In terms of assembly, part of the 30S ribosomal subunit. Contacts proteins S4 and S8.

In terms of biological role, with S4 and S12 plays an important role in translational accuracy. Located at the back of the 30S subunit body where it stabilizes the conformation of the head with respect to the body. This Granulibacter bethesdensis (strain ATCC BAA-1260 / CGDNIH1) protein is Small ribosomal subunit protein uS5.